Consider the following 176-residue polypeptide: ATP-dependent protease subunit HslV (176 aa).

The active site involves Thr-6. The Na(+) site is built by Ser-161, Cys-164, and Thr-167.

This sequence belongs to the peptidase T1B family. HslV subfamily. In terms of assembly, a double ring-shaped homohexamer of HslV is capped on each side by a ring-shaped HslU homohexamer. The assembly of the HslU/HslV complex is dependent on binding of ATP.

It localises to the cytoplasm. The enzyme catalyses ATP-dependent cleavage of peptide bonds with broad specificity.. With respect to regulation, allosterically activated by HslU binding. Protease subunit of a proteasome-like degradation complex believed to be a general protein degrading machinery. This is ATP-dependent protease subunit HslV from Thermosipho africanus (strain TCF52B).